The primary structure comprises 626 residues: Probable metalloendopeptidase G1-type (626 aa).

Zn(2+) is bound at residue H42. E45 is an active-site residue. H46 contributes to the Zn(2+) binding site.

Belongs to the peptidase M44 family. Requires Zn(2+) as cofactor.

Functionally, seems to be involved in viral proteins maturation by cleavage at Ala-Gly-|-Xaa motifs. The protein is Probable metalloendopeptidase G1-type of Fowlpox virus (strain NVSL) (FPV).